The chain runs to 163 residues: Peptidyl-prolyl cis-trans isomerase NIMA-interacting 1 (163 aa).

Residues 5-39 (EKLPPGWEKRMSRSSGRVYYFNHITNASQWERPSG) enclose the WW domain. Residues 33–54 (QWERPSGNSSSGGKNGQGEPAR) are disordered. At Ser-43 the chain carries Phosphoserine. Lys-46 is subject to N6-acetyllysine. Residues 52-163 (PARVRCSHLL…SGIHIILRTE (112 aa)) enclose the PpiC domain. A Phosphoserine; by DAPK1 modification is found at Ser-71. Ser-108 carries the phosphoserine modification.

As to quaternary structure, interacts with STIL. Interacts with KIF20B. Interacts with NEK6. Interacts (via WW domain) with PRKX. Interacts with BTK. Interacts (via PpiC domain) with DAPK1. Interacts with the phosphorylated form of RAF1. Interacts (via WW domain) with ATCAY; upon NGF stimulation. Interacts with PML (isoform PML-4). Interacts with BCL6. Interacts with FBXW7, disrupting FBXW7 dimerization and promoting FBXW7 autoubiquitination and degradation. Directly interacts with RBBP8/CtIP; this interaction depends upon RBBP8 phosphorylation. Interacts (via WW domain) with IRAK3/IRAK-M (when phosphorylated at 'Ser-110') in response to IL33-mediated (but not TLR4 ligand LPS) dendritic cell stimulation. Interacts with PGK1 (when phosphorylated at 'Ser-203'); the interaction is direct, occurs under hypoxic conditions, and targets PGK1 to the mitochondrion by promoting interactions with the TOM complex. Post-translationally, phosphorylation at Ser-71 by DAPK1 results in inhibition of its catalytic activity, nuclear localization, and its ability to induce centrosome amplification, chromosome instability and cell transformation. Ser-71 is dephosphorylated upon IL33-stimulation of dendritic cells. As to expression, expressed in immune cells in the lung (at protein level). The phosphorylated form at Ser-71 is expressed in normal breast tissue cells but not in breast cancer cells.

It is found in the nucleus. The protein localises to the nucleus speckle. It localises to the cytoplasm. It carries out the reaction [protein]-peptidylproline (omega=180) = [protein]-peptidylproline (omega=0). In terms of biological role, peptidyl-prolyl cis/trans isomerase (PPIase) that binds to and isomerizes specific phosphorylated Ser/Thr-Pro (pSer/Thr-Pro) motifs. By inducing conformational changes in a subset of phosphorylated proteins, acts as a molecular switch in multiple cellular processes. Displays a preference for acidic residues located N-terminally to the proline bond to be isomerized. Regulates mitosis presumably by interacting with NIMA and attenuating its mitosis-promoting activity. Down-regulates kinase activity of BTK. Can transactivate multiple oncogenes and induce centrosome amplification, chromosome instability and cell transformation. Required for the efficient dephosphorylation and recycling of RAF1 after mitogen activation. Binds and targets PML and BCL6 for degradation in a phosphorylation-dependent manner. Acts as a regulator of JNK cascade by binding to phosphorylated FBXW7, disrupting FBXW7 dimerization and promoting FBXW7 autoubiquitination and degradation: degradation of FBXW7 leads to subsequent stabilization of JUN. May facilitate the ubiquitination and proteasomal degradation of RBBP8/CtIP through CUL3/KLHL15 E3 ubiquitin-protein ligase complex, hence favors DNA double-strand repair through error-prone non-homologous end joining (NHEJ) over error-free, RBBP8-mediated homologous recombination (HR). Upon IL33-induced lung inflammation, catalyzes cis-trans isomerization of phosphorylated IRAK3/IRAK-M, inducing IRAK3 stabilization, nuclear translocation and expression of pro-inflammatory genes in dendritic cells. Catalyzes cis-trans isomerization of phosphorylated phosphoglycerate kinase PGK1 under hypoxic conditions to promote its binding to the TOM complex and targeting to the mitochondrion. This chain is Peptidyl-prolyl cis-trans isomerase NIMA-interacting 1 (PIN1), found in Homo sapiens (Human).